A 92-amino-acid polypeptide reads, in one-letter code: Putative regulatory protein CA_C1717 (92 aa).

The protein belongs to the RemA family.

The polypeptide is Putative regulatory protein CA_C1717 (Clostridium acetobutylicum (strain ATCC 824 / DSM 792 / JCM 1419 / IAM 19013 / LMG 5710 / NBRC 13948 / NRRL B-527 / VKM B-1787 / 2291 / W)).